A 262-amino-acid polypeptide reads, in one-letter code: Phosphoribosyl 1,2-cyclic phosphate 1,2-diphosphodiesterase (262 aa).

Residues histidine 6, histidine 8, aspartate 13, histidine 38, glutamate 63, histidine 76, histidine 193, aspartate 245, and histidine 247 each coordinate Mn(2+).

It belongs to the PHP family. The cofactor is Mn(2+).

The enzyme catalyses alpha-D-ribose 1,2-cyclic phosphate 5-phosphate + H2O = D-ribose 2,5-bisphosphate + H(+). It carries out the reaction D-ribose 2,5-bisphosphate + H2O = D-ribose 5-phosphate + phosphate. Functionally, involved in degradation of methylphosphonate. Catalyzes the hydrolysis of the phosphate ester at carbon-1 of 5-phospho-D-ribose 1,2-cyclic phosphate to form ribose 2,5-bisphosphate. This intermediate is then hydrolyzed to ribose-5-phosphate and inorganic phosphate. This chain is Phosphoribosyl 1,2-cyclic phosphate 1,2-diphosphodiesterase, found in Eggerthella lenta (strain ATCC 25559 / DSM 2243 / CCUG 17323 / JCM 9979 / KCTC 3265 / NCTC 11813 / VPI 0255 / 1899 B) (Eubacterium lentum).